A 269-amino-acid polypeptide reads, in one-letter code: 4-hydroxy-tetrahydrodipicolinate reductase (269 aa).

NAD(+) is bound by residues 9-14 (GAGGRM) and E35. An NADP(+)-binding site is contributed by R36. NAD(+)-binding positions include 98–100 (GTT) and 122–125 (ASNY). The active-site Proton donor/acceptor is H155. H156 serves as a coordination point for (S)-2,3,4,5-tetrahydrodipicolinate. K159 serves as the catalytic Proton donor. 165–166 (GT) contacts (S)-2,3,4,5-tetrahydrodipicolinate.

It belongs to the DapB family.

It localises to the cytoplasm. It catalyses the reaction (S)-2,3,4,5-tetrahydrodipicolinate + NAD(+) + H2O = (2S,4S)-4-hydroxy-2,3,4,5-tetrahydrodipicolinate + NADH + H(+). The catalysed reaction is (S)-2,3,4,5-tetrahydrodipicolinate + NADP(+) + H2O = (2S,4S)-4-hydroxy-2,3,4,5-tetrahydrodipicolinate + NADPH + H(+). The protein operates within amino-acid biosynthesis; L-lysine biosynthesis via DAP pathway; (S)-tetrahydrodipicolinate from L-aspartate: step 4/4. Catalyzes the conversion of 4-hydroxy-tetrahydrodipicolinate (HTPA) to tetrahydrodipicolinate. The sequence is that of 4-hydroxy-tetrahydrodipicolinate reductase from Actinobacillus pleuropneumoniae serotype 3 (strain JL03).